We begin with the raw amino-acid sequence, 835 residues long: Probable alpha-glucuronidase A (835 aa).

A signal peptide spans 1-18; that stretch reads MRWSFLTVLLWLVSLTGA. N-linked (GlcNAc...) asparagine glycosylation is found at Asn-49, Asn-101, Asn-148, Asn-221, Asn-278, Asn-309, Asn-342, Asn-460, Asn-522, Asn-571, Asn-677, and Asn-727.

This sequence belongs to the glycosyl hydrolase 67 family.

The protein resides in the secreted. The catalysed reaction is an alpha-D-glucuronoside + H2O = D-glucuronate + an alcohol. Alpha-glucuronidase involved in the hydrolysis of xylan, a major structural heterogeneous polysaccharide found in plant biomass representing the second most abundant polysaccharide in the biosphere, after cellulose. Releases 4-O-methylglucuronic acid from xylan. The sequence is that of Probable alpha-glucuronidase A (aguA) from Aspergillus oryzae (strain ATCC 42149 / RIB 40) (Yellow koji mold).